Reading from the N-terminus, the 181-residue chain is Inner membrane-spanning protein YciB (181 aa).

A run of 5 helical transmembrane segments spans residues Phe-3–Tyr-23, Thr-49–Gln-69, Trp-76–Phe-96, Val-119–Phe-139, and Phe-149–Leu-169.

It belongs to the YciB family.

The protein localises to the cell inner membrane. Functionally, plays a role in cell envelope biogenesis, maintenance of cell envelope integrity and membrane homeostasis. This chain is Inner membrane-spanning protein YciB, found in Nitrosospira multiformis (strain ATCC 25196 / NCIMB 11849 / C 71).